A 269-amino-acid chain; its full sequence is Hemin import ATP-binding protein HmuV (269 aa).

An ABC transporter domain is found at Ile-5–Cys-242. Gly-37–Ser-44 provides a ligand contact to ATP.

Belongs to the ABC transporter superfamily. Heme (hemin) importer (TC 3.A.1.14.5) family. As to quaternary structure, the complex is composed of two ATP-binding proteins (HmuV), two transmembrane proteins (HmuU) and a solute-binding protein (HmuT).

Its subcellular location is the cell inner membrane. In terms of biological role, part of the ABC transporter complex HmuTUV involved in hemin import. Responsible for energy coupling to the transport system. The protein is Hemin import ATP-binding protein HmuV of Nitrobacter winogradskyi (strain ATCC 25391 / DSM 10237 / CIP 104748 / NCIMB 11846 / Nb-255).